Here is a 521-residue protein sequence, read N- to C-terminus: Occludin (521 aa).

The interval 1-20 (MSVRPFESPPPYRPDEFKPN) is disordered. At 1 to 66 (MSVRPFESPP…KWTSPPGVIR (66 aa)) the chain is on the cytoplasmic side. The MARVEL domain occupies 60–267 (SPPGVIRILS…IIFFAVKTRR (208 aa)). A helical transmembrane segment spans residues 67–89 (ILSMLIIVMCIAIFACVASTLAW). Residues 90-133 (DRGYGTGLFGGSLNYPYSGFGYGGGYGGGYGGYGYGYGGYTDPR) are Extracellular-facing. The chain crosses the membrane as a helical span at residues 134 to 158 (AAKGFLLAMAAFCFIASLVIFVTSV). Over 159-168 (IRSGMSRTRR) the chain is Cytoplasmic. Residues 169–193 (YYLIVIIVSAILGIMVFIATIVYIM) form a helical membrane-spanning segment. The Extracellular segment spans residues 194–241 (GVNPTAQASGSMYGSQIYMICNQFYTPGGTGLYVDQYLYHYCVVDPQE). A disulfide bridge links Cys214 with Cys235. The helical transmembrane segment at 242–263 (AIAIVLGFMIIVAFALIIFFAV) threads the bilayer. Over 264–521 (KTRRKMDRYD…MVGDYDRRKP (258 aa)) the chain is Cytoplasmic. Ser300 is modified (phosphoserine). Residues 300-329 (SAGTQDMPPPPSDYAERVDSPMAYSSNGKV) form a disordered region. Position 303 is a phosphothreonine (Thr303). Phosphoserine occurs at positions 311 and 319. Residue Ser338 is modified to Phosphoserine; by PKC; in vitro. Phosphoserine is present on Ser358. The tract at residues 361–405 (DFRQPRYSSNGNLETPSKRAPTKGKAGKGKRTDPDHYETDYTTGG) is disordered. Residues 366–375 (RYSSNGNLET) show a composition bias toward polar residues. Position 367 is a phosphotyrosine (Tyr367). Phosphoserine is present on residues Ser368 and Ser369. The segment covering 380–389 (APTKGKAGKG) has biased composition (basic residues). Positions 390–399 (KRTDPDHYET) are enriched in basic and acidic residues. Phosphotyrosine is present on residues Tyr397 and Tyr401. Thr402 is modified (phosphothreonine; by PKC/PRKCH). Thr403 bears the Phosphothreonine mark. The residue at position 407 (Ser407) is a Phosphoserine. Positions 413-521 (EDWVREYPPI…MVGDYDRRKP (109 aa)) constitute an OCEL domain. Residues 424-488 (SDQQRQLYKR…EYNRLKQVKG (65 aa)) adopt a coiled-coil conformation. Phosphoserine is present on Ser489.

This sequence belongs to the ELL/occludin family. In terms of assembly, interacts with TJP1/ZO1. Interacts with VAPA. Interacts with CLDN1, CLDN6, CLDN9, CLDN11, CLDN12 and CLDN17. Interacts with PLSCR1. Interacts with LSR, ILDR1 and ILDR2. Interacts with TJP2/ZO2. Dephosphorylated by PTPRJ. May be phosphorylated by PKC during translocation to cell-cell contacts. As to expression, localized at tight junctions of both epithelial and endothelial cells. Highly expressed in the testis, kidney, lung, liver and brain. Not detected in skeletal muscle, spleen and heart.

It localises to the cell membrane. The protein localises to the cell junction. It is found in the tight junction. Functionally, may play a role in the formation and regulation of the tight junction (TJ) paracellular permeability barrier. The polypeptide is Occludin (Ocln) (Mus musculus (Mouse)).